A 171-amino-acid polypeptide reads, in one-letter code: 3-hydroxydecanoyl-[acyl-carrier-protein] dehydratase (171 aa).

His-70 is a catalytic residue.

This sequence belongs to the thioester dehydratase family. FabA subfamily. In terms of assembly, homodimer.

The protein resides in the cytoplasm. The enzyme catalyses a (3R)-hydroxyacyl-[ACP] = a (2E)-enoyl-[ACP] + H2O. It carries out the reaction (3R)-hydroxydecanoyl-[ACP] = (2E)-decenoyl-[ACP] + H2O. The catalysed reaction is (2E)-decenoyl-[ACP] = (3Z)-decenoyl-[ACP]. It participates in lipid metabolism; fatty acid biosynthesis. Necessary for the introduction of cis unsaturation into fatty acids. Catalyzes the dehydration of (3R)-3-hydroxydecanoyl-ACP to E-(2)-decenoyl-ACP and then its isomerization to Z-(3)-decenoyl-ACP. Can catalyze the dehydratase reaction for beta-hydroxyacyl-ACPs with saturated chain lengths up to 16:0, being most active on intermediate chain length. The polypeptide is 3-hydroxydecanoyl-[acyl-carrier-protein] dehydratase (Colwellia psychrerythraea (strain 34H / ATCC BAA-681) (Vibrio psychroerythus)).